The following is a 234-amino-acid chain: MVEPSLAGLLGLMQLTDSALPTGAFSHSLGFETYMAAEQLEDRESFSAWLEMFVDQQLTHTDALAVRLVYAAGDFERVEDLDELVTAQALPRQIREGGTTMGRRLLSIGARSYPGEWVRRYQQGVEEERLRGHQATVWGVLARGLDVPEDTAVASHVYAAVISLTQNAVRGIPLGQNTGQAVIRAAQEWVGRAVATSRRLSEEGIAEEVLGAVAPGLEIAQMNHERQRARLFMS.

The protein belongs to the UreF family. UreD, UreF and UreG form a complex that acts as a GTP-hydrolysis-dependent molecular chaperone, activating the urease apoprotein by helping to assemble the nickel containing metallocenter of UreC. The UreE protein probably delivers the nickel.

The protein resides in the cytoplasm. Required for maturation of urease via the functional incorporation of the urease nickel metallocenter. This Kocuria rhizophila (strain ATCC 9341 / DSM 348 / NBRC 103217 / DC2201) protein is Urease accessory protein UreF.